The chain runs to 212 residues: MKLSKYIDHTLLKPQATEKDILKLIEEAKTYDFASVCVNPSWVKLAYENLKDTDVKVCTVVGFPLGATSTASKVYETKVAIEDGADEIDMVISVGQLKSGNDEYVKEEIKKIVEASKNKLVKVIIETCLLTEEEKVKACTLSKEAGADYVKTSTGFSTGGAKPEDIKLMRETVGKNMGVKASGGIHTREEMEVMIENGATRIGASCGVELVK.

The active-site Proton donor/acceptor is the D89. K151 acts as the Schiff-base intermediate with acetaldehyde in catalysis. K180 (proton donor/acceptor) is an active-site residue.

The protein belongs to the DeoC/FbaB aldolase family. DeoC type 1 subfamily.

The protein resides in the cytoplasm. It carries out the reaction 2-deoxy-D-ribose 5-phosphate = D-glyceraldehyde 3-phosphate + acetaldehyde. Its pathway is carbohydrate degradation; 2-deoxy-D-ribose 1-phosphate degradation; D-glyceraldehyde 3-phosphate and acetaldehyde from 2-deoxy-alpha-D-ribose 1-phosphate: step 2/2. Functionally, catalyzes a reversible aldol reaction between acetaldehyde and D-glyceraldehyde 3-phosphate to generate 2-deoxy-D-ribose 5-phosphate. This is Deoxyribose-phosphate aldolase from Clostridium botulinum (strain Kyoto / Type A2).